The primary structure comprises 155 residues: Large ribosomal subunit protein bL17 (155 aa).

The protein belongs to the bacterial ribosomal protein bL17 family. As to quaternary structure, part of the 50S ribosomal subunit. Contacts protein L32.

The chain is Large ribosomal subunit protein bL17 from Bifidobacterium adolescentis (strain ATCC 15703 / DSM 20083 / NCTC 11814 / E194a).